The following is a 1104-amino-acid chain: A disintegrin and metalloproteinase with thrombospondin motifs 10 (1104 aa).

Residues 1 to 25 form the signal peptide; the sequence is MASACQILRWALALGLGLTFKVTHA. Positions 26–233 are excised as a propeptide; it reads FRSQDELLSS…SERGQLGLKR (208 aa). N-linked (GlcNAc...) asparagine glycans are attached at residues N90 and N222. A Peptidase M12B domain is found at 239 to 457; sequence RYVETLVVAD…GLGLCLNNRP (219 aa). Intrachain disulfides connect C315–C376, C351–C358, C370–C452, C409–C436, C479–C501, C490–C508, C496–C531, C521–C536, C559–C596, C563–C601, and C574–C586. H392 lines the Zn(2+) pocket. The active site involves E393. Zn(2+) contacts are provided by H396 and H402. The region spanning 460 to 546 is the Disintegrin domain; sequence QDFVYPTVAP…VPFGSRPEGV (87 aa). Residues 547 to 602 form the TSP type-1 1 domain; it reads DGAWGPWTPWGDCSRSCGGGVSSSSRHCDSPRPTIGGKYCLGERRRHRSCNTNDCP. The spacer stretch occupies residues 706-818; it reads ETIEGVFSPA…PALHYRFNAP (113 aa). N-linked (GlcNAc...) asparagine glycans are attached at residues N740 and N795. 4 TSP type-1 domains span residues 825-885, 888-943, 944-1003, and 1004-1058; these read PPYS…EPCP, WVVG…QGPM, CPPE…RRCP, and PARW…AKCD. Disulfide bonds link C837–C879, C841–C884, and C852–C866. N-linked (GlcNAc...) asparagine glycosylation is present at N892. Residues 1066 to 1104 enclose the PLAC domain; that stretch reads GPEECKDVNKVAYCPLVLKFQFCSRAYFRQMCCKTCQGR.

In terms of assembly, interacts with FBN1; this interaction promotes microfibrils assembly. It depends on Zn(2+) as a cofactor. Post-translationally, glycosylated. Can be O-fucosylated by POFUT2 on a serine or a threonine residue found within the consensus sequence C1-X(2)-(S/T)-C2-G of the TSP type-1 repeat domains where C1 and C2 are the first and second cysteine residue of the repeat, respectively. Fucosylated repeats can then be further glycosylated by the addition of a beta-1,3-glucose residue by the glucosyltransferase, B3GALTL. Fucosylation mediates the efficient secretion of ADAMTS family members. Can also be C-glycosylated with one or two mannose molecules on tryptophan residues within the consensus sequence W-X-X-W of the TPRs, and N-glycosylated. These other glycosylations can also facilitate secretion. In terms of tissue distribution, widely expressed in adult tissues.

It localises to the secreted. It is found in the extracellular space. Its subcellular location is the extracellular matrix. Its function is as follows. Metalloprotease that participate in microfibrils assembly. Microfibrils are extracellular matrix components occurring independently or along with elastin in the formation of elastic tissues. This chain is A disintegrin and metalloproteinase with thrombospondin motifs 10 (Adamts10), found in Mus musculus (Mouse).